The following is a 117-amino-acid chain: Immunoglobulin heavy variable 1-69D (117 aa).

The N-terminal stretch at 1–19 (MDWTWRFLFVVAAATGVQS) is a signal peptide. Pyrrolidone carboxylic acid is present on Gln-20. The framework-1 stretch occupies residues 20–44 (QVQLVQSGAEVKKPGSSVKVSCKAS). Positions 20–117 (QVQLVQSGAE…EDTAVYYCAR (98 aa)) constitute an Ig-like domain. Cys-41 and Cys-115 are oxidised to a cystine. The complementarity-determining-1 stretch occupies residues 45 to 52 (GGTFSSYA). The interval 53–69 (ISWVRQAPGQGLEWMGG) is framework-2. Residues 70–77 (IIPIFGTA) are complementarity-determining-2. The interval 78–115 (NYAQKFQGRVTITADESTSTAYMELSSLRSEDTAVYYC) is framework-3. Positions 116 to 117 (AR) are complementarity-determining-3.

In terms of assembly, immunoglobulins are composed of two identical heavy chains and two identical light chains; disulfide-linked.

It localises to the secreted. The protein localises to the cell membrane. Its function is as follows. V region of the variable domain of immunoglobulin heavy chains that participates in the antigen recognition. Immunoglobulins, also known as antibodies, are membrane-bound or secreted glycoproteins produced by B lymphocytes. In the recognition phase of humoral immunity, the membrane-bound immunoglobulins serve as receptors which, upon binding of a specific antigen, trigger the clonal expansion and differentiation of B lymphocytes into immunoglobulins-secreting plasma cells. Secreted immunoglobulins mediate the effector phase of humoral immunity, which results in the elimination of bound antigens. The antigen binding site is formed by the variable domain of one heavy chain, together with that of its associated light chain. Thus, each immunoglobulin has two antigen binding sites with remarkable affinity for a particular antigen. The variable domains are assembled by a process called V-(D)-J rearrangement and can then be subjected to somatic hypermutations which, after exposure to antigen and selection, allow affinity maturation for a particular antigen. In Homo sapiens (Human), this protein is Immunoglobulin heavy variable 1-69D.